The primary structure comprises 417 residues: Gamma-glutamyl phosphate reductase (417 aa).

It belongs to the gamma-glutamyl phosphate reductase family.

It is found in the cytoplasm. It carries out the reaction L-glutamate 5-semialdehyde + phosphate + NADP(+) = L-glutamyl 5-phosphate + NADPH + H(+). It participates in amino-acid biosynthesis; L-proline biosynthesis; L-glutamate 5-semialdehyde from L-glutamate: step 2/2. Its function is as follows. Catalyzes the NADPH-dependent reduction of L-glutamate 5-phosphate into L-glutamate 5-semialdehyde and phosphate. The product spontaneously undergoes cyclization to form 1-pyrroline-5-carboxylate. This Proteus mirabilis (strain HI4320) protein is Gamma-glutamyl phosphate reductase.